We begin with the raw amino-acid sequence, 330 residues long: Clavaminate synthase-like protein At3g21360 (330 aa).

Position 2 is an N-acetylalanine (alanine 2). Fe cation-binding residues include histidine 120, glutamate 122, and histidine 313.

Fe cation serves as cofactor.

The chain is Clavaminate synthase-like protein At3g21360 from Arabidopsis thaliana (Mouse-ear cress).